The sequence spans 228 residues: MPRHYAIVPAAGSGSRFGAEKPKQYLDLLGRPLIFHTLAALTASPDIERVWVVLAPDDPWWPRYDWSELGSKLETVRCGGATRAESVSNGLRAAAMVAADDDWVLVHDAARPCLSAAMLDALFAELASDPVGGILAVPVADTLKRADAEQRVGATEPRDGLWQAQTPQMFRYGLLGEALEKCRDVTDEAGAIEAVGLKPKLVRGDSTNLKVTYPADLALAAMILRARK.

It belongs to the IspD/TarI cytidylyltransferase family. IspD subfamily.

The enzyme catalyses 2-C-methyl-D-erythritol 4-phosphate + CTP + H(+) = 4-CDP-2-C-methyl-D-erythritol + diphosphate. Its pathway is isoprenoid biosynthesis; isopentenyl diphosphate biosynthesis via DXP pathway; isopentenyl diphosphate from 1-deoxy-D-xylulose 5-phosphate: step 2/6. Its function is as follows. Catalyzes the formation of 4-diphosphocytidyl-2-C-methyl-D-erythritol from CTP and 2-C-methyl-D-erythritol 4-phosphate (MEP). The chain is 2-C-methyl-D-erythritol 4-phosphate cytidylyltransferase from Dechloromonas aromatica (strain RCB).